The primary structure comprises 339 residues: Anthranilate phosphoribosyltransferase (339 aa).

5-phospho-alpha-D-ribose 1-diphosphate contacts are provided by residues G79, 82-83 (GD), S87, 89-92 (NIST), 107-115 (KHGNRSISS), and S119. G79 contributes to the anthranilate binding site. S91 contributes to the Mg(2+) binding site. Position 110 (N110) interacts with anthranilate. R165 lines the anthranilate pocket. Mg(2+)-binding residues include D224 and E225.

Belongs to the anthranilate phosphoribosyltransferase family. As to quaternary structure, homodimer. Requires Mg(2+) as cofactor.

The enzyme catalyses N-(5-phospho-beta-D-ribosyl)anthranilate + diphosphate = 5-phospho-alpha-D-ribose 1-diphosphate + anthranilate. It functions in the pathway amino-acid biosynthesis; L-tryptophan biosynthesis; L-tryptophan from chorismate: step 2/5. Catalyzes the transfer of the phosphoribosyl group of 5-phosphorylribose-1-pyrophosphate (PRPP) to anthranilate to yield N-(5'-phosphoribosyl)-anthranilate (PRA). The sequence is that of Anthranilate phosphoribosyltransferase from Listeria monocytogenes serotype 4b (strain CLIP80459).